Here is a 495-residue protein sequence, read N- to C-terminus: UDP-N-acetylmuramoyl-L-alanyl-D-glutamate--2,6-diaminopimelate ligase (495 aa).

UDP-N-acetyl-alpha-D-muramoyl-L-alanyl-D-glutamate contacts are provided by residues Leu-27, Ser-29, and 44-46 (HQA). 116–122 (GTNGKTT) is a binding site for ATP. UDP-N-acetyl-alpha-D-muramoyl-L-alanyl-D-glutamate contacts are provided by residues Asn-157, 158-159 (TT), Ser-185, Gln-191, and Arg-193. Lys-225 is subject to N6-carboxylysine. Meso-2,6-diaminopimelate contacts are provided by residues Arg-390, 414–417 (DNPR), Gly-465, and Glu-469. The short motif at 414-417 (DNPR) is the Meso-diaminopimelate recognition motif element.

Belongs to the MurCDEF family. MurE subfamily. Mg(2+) serves as cofactor. Carboxylation is probably crucial for Mg(2+) binding and, consequently, for the gamma-phosphate positioning of ATP.

The protein localises to the cytoplasm. It catalyses the reaction UDP-N-acetyl-alpha-D-muramoyl-L-alanyl-D-glutamate + meso-2,6-diaminopimelate + ATP = UDP-N-acetyl-alpha-D-muramoyl-L-alanyl-gamma-D-glutamyl-meso-2,6-diaminopimelate + ADP + phosphate + H(+). The protein operates within cell wall biogenesis; peptidoglycan biosynthesis. Its function is as follows. Catalyzes the addition of meso-diaminopimelic acid to the nucleotide precursor UDP-N-acetylmuramoyl-L-alanyl-D-glutamate (UMAG) in the biosynthesis of bacterial cell-wall peptidoglycan. The chain is UDP-N-acetylmuramoyl-L-alanyl-D-glutamate--2,6-diaminopimelate ligase from Salmonella paratyphi A (strain ATCC 9150 / SARB42).